Here is a 138-residue protein sequence, read N- to C-terminus: Flagellar basal body rod protein FlgB (138 aa).

This sequence belongs to the flagella basal body rod proteins family. The basal body constitutes a major portion of the flagellar organelle and consists of a number of rings mounted on a central rod. In Gram-negative bacteria, at least four rings, L, P, S and M are present, whereas Gram-positive bacteria lack the L and P rings. The rod consists of about 26 subunits of FlgG in the distal portion, and FlgB, FlgC and FlgF build up the proximal portion of the rod with about 6 subunits each. Rod assembly occurs by export via the flagellum-specific pathway of its constituent proteins and by their incorporation into the rod structure in the probable order of FlgB, FlgC, FlgF and FlgG. Another protein, FliE, also assembles onto the stable rod structure.

It is found in the bacterial flagellum basal body. Functionally, structural component of flagellum, the bacterial motility apparatus. Part of the rod structure of flagellar basal body. This Escherichia coli (strain K12) protein is Flagellar basal body rod protein FlgB (flgB).